We begin with the raw amino-acid sequence, 618 residues long: Chaperone protein HscA homolog (618 aa).

This sequence belongs to the heat shock protein 70 family.

In terms of biological role, chaperone involved in the maturation of iron-sulfur cluster-containing proteins. Has a low intrinsic ATPase activity which is markedly stimulated by HscB. The chain is Chaperone protein HscA homolog from Methylibium petroleiphilum (strain ATCC BAA-1232 / LMG 22953 / PM1).